A 441-amino-acid chain; its full sequence is MSLITDIIAREVLDSRGNPTLEAEVITELGGFGRGMVPSGASTGEHEAVELRDGDKSRFGGKGTTKAVANVNDAIAKALVGKFDVTDQRAIDQAMIELDGTENKGNLGANAILAVSIAAARAAADELGVPLFSYLGGANSYVLPTPMMNVINGGAHSANKVDFQEFMIMPVGAPTVKEAIRYGSETFHALKKLLEADGKATSVGDEGGFAPDFADNEEPLKYLIRAIEAAGYKPGKDIAIAVDVASSELYDAETKTYKLRWSTGEEFTTPEFIKYLEDLADRYPIISIEDPIDENEWEDWAAITAELGKKVQLVGDDFFVTNTQYLEKGINMGAANSILIKVNQIGTLTETFEAIEMAKEAGYTAIVSHRSGETEDTTISDLVVATNAGQIKTGSLSRTDRIAKYNQLIRIEELLDTTAKYKGIHSFYNLSAAAREVIENK.

A (2R)-2-phosphoglycerate-binding site is contributed by Q164. Residue E206 is the Proton donor of the active site. D243, E289, and D316 together coordinate Mg(2+). K341, R370, S371, and K392 together coordinate (2R)-2-phosphoglycerate. K341 serves as the catalytic Proton acceptor.

The protein belongs to the enolase family. Requires Mg(2+) as cofactor.

It is found in the cytoplasm. It localises to the secreted. The protein resides in the cell surface. The catalysed reaction is (2R)-2-phosphoglycerate = phosphoenolpyruvate + H2O. The protein operates within carbohydrate degradation; glycolysis; pyruvate from D-glyceraldehyde 3-phosphate: step 4/5. Its function is as follows. Catalyzes the reversible conversion of 2-phosphoglycerate (2-PG) into phosphoenolpyruvate (PEP). It is essential for the degradation of carbohydrates via glycolysis. The sequence is that of Enolase from Leuconostoc mesenteroides subsp. mesenteroides (strain ATCC 8293 / DSM 20343 / BCRC 11652 / CCM 1803 / JCM 6124 / NCDO 523 / NBRC 100496 / NCIMB 8023 / NCTC 12954 / NRRL B-1118 / 37Y).